The primary structure comprises 270 residues: Protein US2 homolog (270 aa).

It belongs to the herpesviridae US2 family.

This Gallid herpesvirus 2 (strain Chicken/Md5/ATCC VR-987) (GaHV-2) protein is Protein US2 homolog (MDV091).